Here is a 350-residue protein sequence, read N- to C-terminus: Protein SGT1 homolog A (350 aa).

TPR repeat units lie at residues 2-35 (AKEL…DPNC), 37-69 (EFFA…DPSL), and 71-103 (KAYL…TPSE). Residues 149 to 238 (TAKYRHEYYQ…ADIITWASLE (90 aa)) form the CS domain. The SGS domain maps to 260-350 (AYPSSKKVKD…DGMELKKWEI (91 aa)).

This sequence belongs to the SGT1 family. Interacts with RAR1. Forms a ternary complex with RAR1 and barley HSP90.

In terms of biological role, functions in R gene-mediated resistance, but participates in a lower extent than SGT1B to RPP5-mediated resistance. Not required for RPM1, RPS2, RPS4 and RPS5-mediated resistance. Probably required for SCF-mediated ubiquitination, by coupling HSP90 to SCF complex for ubiquitination of HSP90 client proteins. In Arabidopsis thaliana (Mouse-ear cress), this protein is Protein SGT1 homolog A (SGT1A).